Consider the following 252-residue polypeptide: Fatty acid elongase 4 (252 aa).

Residues 25-45 (LVSWHALVLGHLLYLFVVFVM) traverse the membrane as a helical segment. Residue Asn-56 is glycosylated (N-linked (GlcNAc...) asparagine). A helical membrane pass occupies residues 60–80 (VLVVYNVLQICLSAAMAINLS). A glycan (N-linked (GlcNAc...) asparagine) is linked at Asn-89. 5 consecutive transmembrane segments (helical) span residues 100 to 120 (FWMFVHYCSKYIDMLDTVFIL), 127 to 147 (QLSFLHVYHHCTIGLIWGILL), 150 to 170 (GLANGTAFFGTWINSSVHFLM), 187 to 207 (FLLTKIQMLQFSLCILHAILV), and 214 to 234 (FTLGWNLLQLLYNASLLVLFL). A HxxHH motif motif is present at residues 132 to 136 (HVYHH). The active-site Nucleophile is His-135.

This sequence belongs to the ELO family.

The protein localises to the membrane. It catalyses the reaction (5Z,8Z,11Z,14Z)-eicosatetraenoyl-CoA + malonyl-CoA + H(+) = (7Z,10Z,13Z,16Z)-3-oxodocosatetraenoyl-CoA + CO2 + CoA. The protein operates within lipid metabolism; fatty acid biosynthesis. In terms of biological role, involved in the synthesis of fatty acids. Elongates arachidonate and other C20 polyunsaturated fatty acids (PUFAs) with a preference for n-6 PUFAs. Not involved in fatty acid synthesis up to C18. The sequence is that of Fatty acid elongase 4 from Trypanosoma brucei brucei (strain 927/4 GUTat10.1).